Consider the following 116-residue polypeptide: Nucleoid-associated protein PMT9312_0020 (116 aa).

The protein belongs to the YbaB/EbfC family. Homodimer.

The protein localises to the cytoplasm. Its subcellular location is the nucleoid. Its function is as follows. Binds to DNA and alters its conformation. May be involved in regulation of gene expression, nucleoid organization and DNA protection. This Prochlorococcus marinus (strain MIT 9312) protein is Nucleoid-associated protein PMT9312_0020.